The following is a 486-amino-acid chain: Protein nucleotidyltransferase YdiU (486 aa).

Positions 90, 92, 93, 113, 125, 126, 176, and 183 each coordinate ATP. The active-site Proton acceptor is aspartate 252. Positions 253 and 262 each coordinate Mg(2+). ATP is bound at residue aspartate 262.

It belongs to the SELO family. Mg(2+) is required as a cofactor. It depends on Mn(2+) as a cofactor.

It catalyses the reaction L-seryl-[protein] + ATP = 3-O-(5'-adenylyl)-L-seryl-[protein] + diphosphate. It carries out the reaction L-threonyl-[protein] + ATP = 3-O-(5'-adenylyl)-L-threonyl-[protein] + diphosphate. The catalysed reaction is L-tyrosyl-[protein] + ATP = O-(5'-adenylyl)-L-tyrosyl-[protein] + diphosphate. The enzyme catalyses L-histidyl-[protein] + UTP = N(tele)-(5'-uridylyl)-L-histidyl-[protein] + diphosphate. It catalyses the reaction L-seryl-[protein] + UTP = O-(5'-uridylyl)-L-seryl-[protein] + diphosphate. It carries out the reaction L-tyrosyl-[protein] + UTP = O-(5'-uridylyl)-L-tyrosyl-[protein] + diphosphate. Nucleotidyltransferase involved in the post-translational modification of proteins. It can catalyze the addition of adenosine monophosphate (AMP) or uridine monophosphate (UMP) to a protein, resulting in modifications known as AMPylation and UMPylation. This chain is Protein nucleotidyltransferase YdiU, found in Pseudomonas aeruginosa (strain LESB58).